Consider the following 347-residue polypeptide: Protein phosphatase 1 regulatory subunit 3G (347 aa).

The tract at residues M1–A77 is disordered. The segment covering A13–P22 has biased composition (polar residues). Position 81 is a phosphoserine (S81). Residues E200–R339 enclose the CBM21 domain. Residues D258–T286 form a disordered region.

Functionally, glycogen-targeting subunit for protein phosphatase 1 (PP1). Involved in the regulation of hepatic glycogenesis in a manner coupled to the fasting-feeding cycle and distinct from other glycogen-targeting subunits. The chain is Protein phosphatase 1 regulatory subunit 3G (Ppp1r3g) from Mus musculus (Mouse).